We begin with the raw amino-acid sequence, 476 residues long: Glutamate mutase epsilon subunit (476 aa).

An L-glutamate-binding site is contributed by arginine 62. Glycine 64 lines the adenosylcob(III)alamin pocket. Arginine 96 contacts L-glutamate. Asparagine 119 serves as a coordination point for adenosylcob(III)alamin. L-glutamate contacts are provided by residues arginine 145–histidine 146, glutamate 167, and tyrosine 173. Proline 176 provides a ligand contact to adenosylcob(III)alamin. An L-glutamate-binding site is contributed by tyrosine 177. Adenosylcob(III)alamin-binding residues include phenylalanine 289, lysine 318, and glutamate 322.

It belongs to the methylaspartate mutase GlmE subunit family. As to quaternary structure, heterotetramer composed of 2 epsilon subunits (GlmE) and 2 sigma subunits (GlmS). GlmE exists as a homodimer and GlmS as a monomer. Adenosylcob(III)alamin is required as a cofactor.

It carries out the reaction (2S,3S)-3-methyl-L-aspartate = L-glutamate. It functions in the pathway amino-acid degradation; L-glutamate degradation via mesaconate pathway; acetate and pyruvate from L-glutamate: step 1/4. Its function is as follows. Catalyzes the carbon skeleton rearrangement of L-glutamate to L-threo-3-methylaspartate ((2S,3S)-3-methylaspartate). The sequence is that of Glutamate mutase epsilon subunit from Halobacterium salinarum (strain ATCC 700922 / JCM 11081 / NRC-1) (Halobacterium halobium).